A 154-amino-acid chain; its full sequence is 6,7-dimethyl-8-ribityllumazine synthase (154 aa).

5-amino-6-(D-ribitylamino)uracil is bound by residues phenylalanine 21, 55–57, and 79–81; these read AFE and CVI. (2S)-2-hydroxy-3-oxobutyl phosphate is bound at residue 84-85; it reads AT. The active-site Proton donor is the histidine 87. A 5-amino-6-(D-ribitylamino)uracil-binding site is contributed by phenylalanine 111. A (2S)-2-hydroxy-3-oxobutyl phosphate-binding site is contributed by arginine 125.

The protein belongs to the DMRL synthase family. Forms an icosahedral capsid composed of 60 subunits, arranged as a dodecamer of pentamers.

The enzyme catalyses (2S)-2-hydroxy-3-oxobutyl phosphate + 5-amino-6-(D-ribitylamino)uracil = 6,7-dimethyl-8-(1-D-ribityl)lumazine + phosphate + 2 H2O + H(+). The protein operates within cofactor biosynthesis; riboflavin biosynthesis; riboflavin from 2-hydroxy-3-oxobutyl phosphate and 5-amino-6-(D-ribitylamino)uracil: step 1/2. In terms of biological role, catalyzes the formation of 6,7-dimethyl-8-ribityllumazine by condensation of 5-amino-6-(D-ribitylamino)uracil with 3,4-dihydroxy-2-butanone 4-phosphate. This is the penultimate step in the biosynthesis of riboflavin. This chain is 6,7-dimethyl-8-ribityllumazine synthase, found in Macrococcus caseolyticus (strain JCSC5402) (Macrococcoides caseolyticum).